The primary structure comprises 112 residues: Large ribosomal subunit protein P2-B (112 aa).

The segment at 89 to 112 is disordered; that stretch reads APAAADAKKEEEEEDDDMGFGLFD.

The protein belongs to the eukaryotic ribosomal protein P1/P2 family. In terms of assembly, P1 and P2 exist as dimers at the large ribosomal subunit. Phosphorylated.

Functionally, plays an important role in the elongation step of protein synthesis. This is Large ribosomal subunit protein P2-B from Trypanosoma cruzi.